Consider the following 917-residue polypeptide: Transcriptional regulatory protein SEF1 (917 aa).

A disordered region spans residues 1-88 (MKFEKGKVRI…SKPTGHRPVT (88 aa)). The span at 13–27 (KPSPTPTNPQTPLPL) shows a compositional bias: pro residues. The span at 56–70 (SNSTASTPNSATPTS) shows a compositional bias: low complexity. The segment covering 71-81 (VGTPPQKTSKP) has biased composition (polar residues). The segment at residues 90 to 120 (CTFCRQHKIKCNASDNYPNPCERCKKMGLKC) is a DNA-binding region (zn(2)-C6 fungal-type). Positions 129–164 (RKGSQIQSLKSDVDELKAKIEMLTKNESLLTQALNQ) form a coiled coil. Disordered regions lie at residues 168–212 (NHAS…ASPI) and 778–849 (QQYP…PFIL). The segment covering 171–184 (SQQQQSSGSQSQQQ) has biased composition (low complexity). Over residues 191 to 212 (RALSYTSANSSPQVAFSNASPI) the composition is skewed to polar residues. Residues 778–827 (QQYPMQQDQQQQEPSQQQQQKHSQQSQQYQQQQQSNQQQPHLQHQRQFQQ) show a composition bias toward low complexity.

Interacts with SSN3 and SFU1. Phosphorylated by SSN3 under iron-depleted conditions which leads to nuclear localization.

The protein localises to the cytoplasm. It is found in the nucleus. Its function is as follows. Transcription factor which plays an essential role in virulence by activating the transcription of iron uptake genes such as FRE7 in iron-poor environments such as the host bloodstream and internal organs. Promotes commensalism in a mouse model of gastrointestinal infection. This is Transcriptional regulatory protein SEF1 (SEF1) from Candida albicans (strain SC5314 / ATCC MYA-2876) (Yeast).